Reading from the N-terminus, the 901-residue chain is HTH-type transcriptional regulator MalT (901 aa).

Ser-39 to Thr-46 serves as a coordination point for ATP. The HTH luxR-type domain maps to Glu-829 to Leu-894. A DNA-binding region (H-T-H motif) is located at residues Asn-853–Arg-872.

It belongs to the MalT family. Monomer in solution. Oligomerizes to an active state in the presence of the positive effectors ATP and maltotriose.

Its activity is regulated as follows. Activated by ATP and maltotriose, which are both required for DNA binding. In terms of biological role, positively regulates the transcription of the maltose regulon whose gene products are responsible for uptake and catabolism of malto-oligosaccharides. Specifically binds to the promoter region of its target genes, recognizing a short DNA motif called the MalT box. This chain is HTH-type transcriptional regulator MalT, found in Escherichia coli O127:H6 (strain E2348/69 / EPEC).